Here is a 286-residue protein sequence, read N- to C-terminus: NADPH-dependent 7-cyano-7-deazaguanine reductase (286 aa).

88–90 (VES) contributes to the substrate binding site. 90–91 (SK) lines the NADPH pocket. C194 functions as the Thioimide intermediate in the catalytic mechanism. The active-site Proton donor is D201. Residue 233–234 (HE) coordinates substrate. NADPH is bound at residue 262–263 (RG).

This sequence belongs to the GTP cyclohydrolase I family. QueF type 2 subfamily. In terms of assembly, homodimer.

The protein localises to the cytoplasm. The enzyme catalyses 7-aminomethyl-7-carbaguanine + 2 NADP(+) = 7-cyano-7-deazaguanine + 2 NADPH + 3 H(+). The protein operates within tRNA modification; tRNA-queuosine biosynthesis. Functionally, catalyzes the NADPH-dependent reduction of 7-cyano-7-deazaguanine (preQ0) to 7-aminomethyl-7-deazaguanine (preQ1). The protein is NADPH-dependent 7-cyano-7-deazaguanine reductase of Colwellia psychrerythraea (strain 34H / ATCC BAA-681) (Vibrio psychroerythus).